The following is a 258-amino-acid chain: Type III pantothenate kinase (258 aa).

6–13 (DVGNTNTV) serves as a coordination point for ATP. Residues Y100 and 107–110 (GADR) contribute to the substrate site. Catalysis depends on D109, which acts as the Proton acceptor. Position 129 (D129) interacts with K(+). T132 contributes to the ATP binding site. T184 contacts substrate.

The protein belongs to the type III pantothenate kinase family. As to quaternary structure, homodimer. NH4(+) is required as a cofactor. The cofactor is K(+).

It is found in the cytoplasm. The catalysed reaction is (R)-pantothenate + ATP = (R)-4'-phosphopantothenate + ADP + H(+). It participates in cofactor biosynthesis; coenzyme A biosynthesis; CoA from (R)-pantothenate: step 1/5. Its function is as follows. Catalyzes the phosphorylation of pantothenate (Pan), the first step in CoA biosynthesis. This Bacillus velezensis (strain DSM 23117 / BGSC 10A6 / LMG 26770 / FZB42) (Bacillus amyloliquefaciens subsp. plantarum) protein is Type III pantothenate kinase.